A 342-amino-acid polypeptide reads, in one-letter code: Galactose mutarotase (342 aa).

Residues 81–82 and histidine 107 contribute to the beta-D-galactose site; that span reads NR. Phosphoserine is present on serine 124. Histidine 176 (proton donor) is an active-site residue. Beta-D-galactose contacts are provided by residues 176–178, aspartate 243, glutamine 279, and glutamate 307; that span reads HSY. The active-site Proton acceptor is the glutamate 307.

Belongs to the aldose epimerase family. Monomer.

It localises to the cytoplasm. The enzyme catalyses alpha-D-galactose = beta-D-galactose. The catalysed reaction is alpha-D-glucose = beta-D-glucose. The protein operates within carbohydrate metabolism; hexose metabolism. It participates in carbohydrate metabolism; galactose metabolism. Functionally, mutarotase that catalyzes the interconversion of beta-D-galactose and alpha-D-galactose during galactose metabolism. Beta-D-galactose is metabolized in the liver into glucose 1-phosphate, the primary metabolic fuel, by the action of four enzymes that constitute the Leloir pathway: GALM, GALK1 (galactokinase), GALT (galactose-1-phosphate uridylyltransferase) and GALE (UDP-galactose-4'-epimerase). Involved in the maintenance of the equilibrium between the beta- and alpha-anomers of galactose, therefore ensuring a sufficient supply of the alpha-anomer for GALK1. Also active on D-glucose although shows a preference for galactose over glucose. The chain is Galactose mutarotase (GALM) from Bos taurus (Bovine).